A 218-amino-acid chain; its full sequence is UPF0502 protein Geob_1184 (218 aa).

Belongs to the UPF0502 family.

In Geotalea daltonii (strain DSM 22248 / JCM 15807 / FRC-32) (Geobacter daltonii), this protein is UPF0502 protein Geob_1184.